The following is a 527-amino-acid chain: Probable protein kinase UbiB (527 aa).

Residues 23–43 form a helical membrane-spanning segment; sequence ELLLELPLPFWLRALSWLLPW. Residues 125–488 enclose the Protein kinase domain; the sequence is RFDSQPLASA…ESDARDQWPL (364 aa). Residues 131–139 and K153 each bind ATP; that span reads LASASVAQV. D288 serves as the catalytic Proton acceptor. The chain crosses the membrane as a helical span at residues 504-524; the sequence is LAPLLATWPAWLMVGGGLYLV.

Belongs to the ABC1 family. UbiB subfamily.

The protein resides in the cell inner membrane. Its pathway is cofactor biosynthesis; ubiquinone biosynthesis [regulation]. Its function is as follows. Is probably a protein kinase regulator of UbiI activity which is involved in aerobic coenzyme Q (ubiquinone) biosynthesis. This chain is Probable protein kinase UbiB, found in Ectopseudomonas mendocina (strain ymp) (Pseudomonas mendocina).